A 423-amino-acid chain; its full sequence is UDP-N-acetylglucosamine 1-carboxyvinyltransferase 1 (423 aa).

23-24 (KN) lines the phosphoenolpyruvate pocket. Arginine 96 lines the UDP-N-acetyl-alpha-D-glucosamine pocket. The Proton donor role is filled by cysteine 120. The residue at position 120 (cysteine 120) is a 2-(S-cysteinyl)pyruvic acid O-phosphothioketal. Aspartate 309 and valine 331 together coordinate UDP-N-acetyl-alpha-D-glucosamine.

Belongs to the EPSP synthase family. MurA subfamily.

The protein resides in the cytoplasm. It catalyses the reaction phosphoenolpyruvate + UDP-N-acetyl-alpha-D-glucosamine = UDP-N-acetyl-3-O-(1-carboxyvinyl)-alpha-D-glucosamine + phosphate. It functions in the pathway cell wall biogenesis; peptidoglycan biosynthesis. In terms of biological role, cell wall formation. Adds enolpyruvyl to UDP-N-acetylglucosamine. The chain is UDP-N-acetylglucosamine 1-carboxyvinyltransferase 1 from Streptococcus pyogenes serotype M1.